The primary structure comprises 176 residues: NAD(P)H-quinone oxidoreductase subunit I, chloroplastic (176 aa).

4Fe-4S ferredoxin-type domains are found at residues 55–84 and 95–124; these read GRIH…VDWE and LNYS…MTEE. Positions 64, 67, 70, 74, 104, 107, 110, and 114 each coordinate [4Fe-4S] cluster.

Belongs to the complex I 23 kDa subunit family. In terms of assembly, NDH is composed of at least 16 different subunits, 5 of which are encoded in the nucleus. [4Fe-4S] cluster serves as cofactor.

It localises to the plastid. The protein resides in the chloroplast thylakoid membrane. The enzyme catalyses a plastoquinone + NADH + (n+1) H(+)(in) = a plastoquinol + NAD(+) + n H(+)(out). The catalysed reaction is a plastoquinone + NADPH + (n+1) H(+)(in) = a plastoquinol + NADP(+) + n H(+)(out). Its function is as follows. NDH shuttles electrons from NAD(P)H:plastoquinone, via FMN and iron-sulfur (Fe-S) centers, to quinones in the photosynthetic chain and possibly in a chloroplast respiratory chain. The immediate electron acceptor for the enzyme in this species is believed to be plastoquinone. Couples the redox reaction to proton translocation, and thus conserves the redox energy in a proton gradient. The sequence is that of NAD(P)H-quinone oxidoreductase subunit I, chloroplastic from Populus alba (White poplar).